The chain runs to 853 residues: Translation initiation factor IF-2 (853 aa).

Disordered stretches follow at residues 1–68 and 94–265; these read MSDT…ASDG and LEQR…DKTS. Positions 20–32 are enriched in polar residues; sequence RKTSGTVKQSFSH. Basic and acidic residues predominate over residues 94-161; sequence LEQRKAEEAS…ASREAVERPS (68 aa). Low complexity predominate over residues 163–176; that stretch reads APRAAPAAQTPPAA. 2 stretches are compositionally biased toward basic and acidic residues: residues 196–219 and 245–265; these read PARD…DAER and RARE…DKTS. One can recognise a tr-type G domain in the interval 347-515; the sequence is PRAPIVTIMG…AISIQAEILE (169 aa). The interval 356–363 is G1; it reads GHVDHGKT. Residue 356 to 363 coordinates GTP; the sequence is GHVDHGKT. Positions 381 to 385 are G2; that stretch reads GITQH. The interval 403 to 406 is G3; the sequence is DTPG. Residues 403-407 and 457-460 each bind GTP; these read DTPGH and TKSD. Residues 457–460 are G4; it reads TKSD. Residues 493-495 form a G5 region; sequence SAK.

It belongs to the TRAFAC class translation factor GTPase superfamily. Classic translation factor GTPase family. IF-2 subfamily.

It is found in the cytoplasm. One of the essential components for the initiation of protein synthesis. Protects formylmethionyl-tRNA from spontaneous hydrolysis and promotes its binding to the 30S ribosomal subunits. Also involved in the hydrolysis of GTP during the formation of the 70S ribosomal complex. The protein is Translation initiation factor IF-2 of Hyphomonas neptunium (strain ATCC 15444).